A 643-amino-acid chain; its full sequence is SURP and G-patch domain-containing protein 1 (643 aa).

Disordered regions lie at residues Ala48–Glu69 and Lys97–Lys119. Thr128 bears the Phosphothreonine mark. Residues Val187–Tyr229 form an SURP motif 1 repeat. Position 252 is a phosphoserine (Ser252). The SURP motif 2 repeat unit spans residues Leu262 to Tyr305. Disordered stretches follow at residues Lys316–Lys335 and Ala360–Glu393. Ser322 is subject to Phosphoserine. The Nuclear localization signal signature appears at Lys378 to Arg384. 4 positions are modified to phosphoserine: Ser407, Ser409, Ser412, and Ser483. Residues Val560 to Pro607 form the G-patch domain.

Component of the spliceosome.

Its subcellular location is the nucleus. Functionally, plays a role in pre-mRNA splicing. This Mus musculus (Mouse) protein is SURP and G-patch domain-containing protein 1 (Sugp1).